Consider the following 161-residue polypeptide: Cytochrome b6-f complex subunit 4 (161 aa).

The next 3 membrane-spanning stretches (helical) occupy residues 37-57 (LLYI…GLAV), 96-116 (LLGV…PFIE), and 132-152 (TVFL…TFPI).

It belongs to the cytochrome b family. PetD subfamily. As to quaternary structure, the 4 large subunits of the cytochrome b6-f complex are cytochrome b6, subunit IV (17 kDa polypeptide, PetD), cytochrome f and the Rieske protein, while the 4 small subunits are PetG, PetL, PetM and PetN. The complex functions as a dimer.

The protein resides in the cellular thylakoid membrane. Component of the cytochrome b6-f complex, which mediates electron transfer between photosystem II (PSII) and photosystem I (PSI), cyclic electron flow around PSI, and state transitions. This is Cytochrome b6-f complex subunit 4 from Cyanothece sp. (strain PCC 7425 / ATCC 29141).